Reading from the N-terminus, the 318-residue chain is Tyrosine--tRNA ligase (318 aa).

Tyr-35 lines the L-tyrosine pocket. A 'HIGH' region motif is present at residues 40-48; the sequence is PSGKVHLGH. Tyr-154, Gln-158, Asp-161, and Gln-176 together coordinate L-tyrosine. Residues 211 to 215 carry the 'KMSKS' region motif; it reads KMSSS. An ATP-binding site is contributed by Ser-214.

The protein belongs to the class-I aminoacyl-tRNA synthetase family. TyrS type 3 subfamily. Homodimer.

It localises to the cytoplasm. The catalysed reaction is tRNA(Tyr) + L-tyrosine + ATP = L-tyrosyl-tRNA(Tyr) + AMP + diphosphate + H(+). Catalyzes the attachment of tyrosine to tRNA(Tyr) in a two-step reaction: tyrosine is first activated by ATP to form Tyr-AMP and then transferred to the acceptor end of tRNA(Tyr). This chain is Tyrosine--tRNA ligase, found in Methanosphaera stadtmanae (strain ATCC 43021 / DSM 3091 / JCM 11832 / MCB-3).